Reading from the N-terminus, the 141-residue chain is Nucleoside diphosphate kinase (141 aa).

Positions 11, 59, 87, 93, 104, and 114 each coordinate ATP. His-117 acts as the Pros-phosphohistidine intermediate in catalysis.

Belongs to the NDK family. As to quaternary structure, homotetramer. Mg(2+) is required as a cofactor.

Its subcellular location is the cytoplasm. It carries out the reaction a 2'-deoxyribonucleoside 5'-diphosphate + ATP = a 2'-deoxyribonucleoside 5'-triphosphate + ADP. The catalysed reaction is a ribonucleoside 5'-diphosphate + ATP = a ribonucleoside 5'-triphosphate + ADP. Major role in the synthesis of nucleoside triphosphates other than ATP. The ATP gamma phosphate is transferred to the NDP beta phosphate via a ping-pong mechanism, using a phosphorylated active-site intermediate. This is Nucleoside diphosphate kinase from Burkholderia mallei (strain NCTC 10247).